We begin with the raw amino-acid sequence, 103 residues long: Small ribosomal subunit protein uS14c (103 aa).

This sequence belongs to the universal ribosomal protein uS14 family. Part of the 30S ribosomal subunit.

It localises to the plastid. Its subcellular location is the chloroplast. Its function is as follows. Binds 16S rRNA, required for the assembly of 30S particles. The polypeptide is Small ribosomal subunit protein uS14c (Agrostis stolonifera (Creeping bentgrass)).